We begin with the raw amino-acid sequence, 497 residues long: Casein kinase I isoform delta (497 aa).

Disordered regions lie at residues 1–58 (MATM…EEMN) and 86–109 (PIQQ…HPTQ). The span at 14–34 (WHNNTSTPMDTTEPATNSHNP) shows a compositional bias: polar residues. Residues 88-105 (QQHQQPPLLQQAQPSQIP) show a composition bias toward low complexity. Positions 191 to 458 (FRLGRKIGSG…YLRNLFRTLF (268 aa)) constitute a Protein kinase domain. ATP contacts are provided by residues 197–205 (IGSGSFGDI) and Lys220. The Proton acceptor role is filled by Asp310.

This sequence belongs to the protein kinase superfamily. CK1 Ser/Thr protein kinase family. Casein kinase I subfamily. In terms of assembly, monomer. In terms of tissue distribution, expressed throughout larval development and into the adult stage in both hypodermal seam cells and the hermaphrodite specific neuron.

It is found in the cytoplasm. Its subcellular location is the nucleus. It localises to the chromosome. The protein resides in the centromere. The protein localises to the cell junction. It is found in the adherens junction. The enzyme catalyses L-seryl-[protein] + ATP = O-phospho-L-seryl-[protein] + ADP + H(+). It carries out the reaction L-threonyl-[protein] + ATP = O-phospho-L-threonyl-[protein] + ADP + H(+). With respect to regulation, exhibits substrate-dependent heparin activation. In terms of biological role, essential serine/threonine-protein kinase that regulates diverse cellular growth and survival processes including Wnt signaling, DNA repair and circadian rhythms. Casein kinases are operationally defined by their preferential utilization of acidic proteins. Positively regulates the expression of components of the heterochronic pathway, which regulate developmental timing, such as the transcriptional repressor lin-42 and microRNAs such as let-7. Negatively regulates cell cycle exit and cell fusion to prevent the premature differentiation of hypodermal seam cells into adult cells. Plays a role in regulating axon branching and subsequently, the maturation of the nervous system, most likely by preventing the premature termination of transcripts for proteins such as Ankyrin/unc-44, which are required for maintaining the nervous system. May phosphorylate ssup-72 to promote nervous system maturation. The chain is Casein kinase I isoform delta from Caenorhabditis elegans.